The following is a 343-amino-acid chain: Mating-type protein MAT-2 (343 aa).

Disordered regions lie at residues 98–117 (RSPQ…SEQT) and 177–223 (KKPW…AAMT). Residues 99–117 (SPQVVSSPQSAQTSPSEQT) show a composition bias toward low complexity. The HMG box DNA-binding region spans 131 to 199 (APRPMNCWII…EHLRQHPNYK (69 aa)). Residues 206–218 (GEKKKRQSRKSKR) show a composition bias toward basic residues.

It is found in the nucleus. In Cochliobolus heterostrophus (Southern corn leaf blight fungus), this protein is Mating-type protein MAT-2 (MAT2).